The primary structure comprises 563 residues: Methylcrotonoyl-CoA carboxylase beta chain, mitochondrial (563 aa).

The transit peptide at 1–22 (MWAVLRLALRPCARASPAGPRA) directs the protein to the mitochondrion. Positions 49-306 (MKALVNQLHE…QKKLDVTIEP (258 aa)) constitute a CoA carboxyltransferase N-terminal domain. The tract at residues 49 to 555 (MKALVNQLHE…SAALNAPIEK (507 aa)) is carboxyltransferase. Position 70 is an N6-acetyllysine; alternate (lysine 70). Lysine 70 carries the post-translational modification N6-succinyllysine; alternate. Residue lysine 141 is modified to N6-succinyllysine. Residues 309-555 (EPLFPADELY…SAALNAPIEK (247 aa)) enclose the CoA carboxyltransferase C-terminal domain. Positions 343–372 (RFTEFKAFYGDTLVTGFARIFGYPVGIVGN) are acyl-CoA binding. Lysine 495 is subject to N6-acetyllysine; alternate. Lysine 495 bears the N6-succinyllysine; alternate mark. Lysine 511 carries the post-translational modification N6-acetyllysine.

This sequence belongs to the AccD/PCCB family. As to quaternary structure, probably a dodecamer composed of six biotin-containing alpha subunits (MCCC1) and six beta (MCCC2) subunits.

It is found in the mitochondrion matrix. The catalysed reaction is 3-methylbut-2-enoyl-CoA + hydrogencarbonate + ATP = 3-methyl-(2E)-glutaconyl-CoA + ADP + phosphate + H(+). The protein operates within amino-acid degradation; L-leucine degradation; (S)-3-hydroxy-3-methylglutaryl-CoA from 3-isovaleryl-CoA: step 2/3. Its function is as follows. Carboxyltransferase subunit of the 3-methylcrotonyl-CoA carboxylase, an enzyme that catalyzes the conversion of 3-methylcrotonyl-CoA to 3-methylglutaconyl-CoA, a critical step for leucine and isovaleric acid catabolism. This is Methylcrotonoyl-CoA carboxylase beta chain, mitochondrial (MCCC2) from Homo sapiens (Human).